Consider the following 538-residue polypeptide: Atos homolog protein B (538 aa).

The segment covering 1-18 (MRHVQAEPSPSSEPEAGP) has biased composition (low complexity). Disordered regions lie at residues 1–103 (MRHV…GLLG), 153–185 (NTLHTRDWASPDPGGQGSLGESPGPAPPGQLHT), 197–300 (GGKS…VLDP), and 323–342 (SLRKGPGLLSPPSASPVPTP). The segment covering 227-238 (HTPPGPGPPGPC) has biased composition (pro residues). Ser-254 and Ser-255 each carry phosphoserine. Low complexity predominate over residues 323-334 (SLRKGPGLLSPP). Positions 348–430 (LLGSFEESLL…VPKVGTIQVT (83 aa)) are required for macropage invasion. Residues 436 to 444 (QTVVKMFLV) form a transactivation domain 1 (TAD1) region.

This sequence belongs to the ATOS family.

The protein resides in the nucleus. Transcription regulator that may syncronize transcriptional and translational programs. The polypeptide is Atos homolog protein B (Pongo abelii (Sumatran orangutan)).